A 171-amino-acid polypeptide reads, in one-letter code: 6,7-dimethyl-8-ribityllumazine synthase (171 aa).

Residues phenylalanine 30, 64–66 (ALE), and 88–90 (AVI) contribute to the 5-amino-6-(D-ribitylamino)uracil site. Position 93–94 (93–94 (ET)) interacts with (2S)-2-hydroxy-3-oxobutyl phosphate. Histidine 96 acts as the Proton donor in catalysis. Asparagine 121 provides a ligand contact to 5-amino-6-(D-ribitylamino)uracil. Residue arginine 135 participates in (2S)-2-hydroxy-3-oxobutyl phosphate binding.

Belongs to the DMRL synthase family.

The catalysed reaction is (2S)-2-hydroxy-3-oxobutyl phosphate + 5-amino-6-(D-ribitylamino)uracil = 6,7-dimethyl-8-(1-D-ribityl)lumazine + phosphate + 2 H2O + H(+). The protein operates within cofactor biosynthesis; riboflavin biosynthesis; riboflavin from 2-hydroxy-3-oxobutyl phosphate and 5-amino-6-(D-ribitylamino)uracil: step 1/2. In terms of biological role, catalyzes the formation of 6,7-dimethyl-8-ribityllumazine by condensation of 5-amino-6-(D-ribitylamino)uracil with 3,4-dihydroxy-2-butanone 4-phosphate. This is the penultimate step in the biosynthesis of riboflavin. The polypeptide is 6,7-dimethyl-8-ribityllumazine synthase (Polynucleobacter necessarius subsp. necessarius (strain STIR1)).